The chain runs to 274 residues: Urease accessory protein UreD (274 aa).

It belongs to the UreD family. As to quaternary structure, ureD, UreF and UreG form a complex that acts as a GTP-hydrolysis-dependent molecular chaperone, activating the urease apoprotein by helping to assemble the nickel containing metallocenter of UreC. The UreE protein probably delivers the nickel.

Its subcellular location is the cytoplasm. In terms of biological role, required for maturation of urease via the functional incorporation of the urease nickel metallocenter. This Thermosynechococcus vestitus (strain NIES-2133 / IAM M-273 / BP-1) protein is Urease accessory protein UreD.